The following is a 122-amino-acid chain: Large ribosomal subunit protein uL14 (122 aa).

This sequence belongs to the universal ribosomal protein uL14 family. As to quaternary structure, part of the 50S ribosomal subunit. Forms a cluster with proteins L3 and L19. In the 70S ribosome, L14 and L19 interact and together make contacts with the 16S rRNA in bridges B5 and B8.

In terms of biological role, binds to 23S rRNA. Forms part of two intersubunit bridges in the 70S ribosome. This chain is Large ribosomal subunit protein uL14, found in Beijerinckia indica subsp. indica (strain ATCC 9039 / DSM 1715 / NCIMB 8712).